Consider the following 198-residue polypeptide: Nucleoside triphosphate pyrophosphatase (198 aa).

The active-site Proton acceptor is the Asp75.

This sequence belongs to the Maf family. Requires a divalent metal cation as cofactor.

It is found in the cytoplasm. It catalyses the reaction a ribonucleoside 5'-triphosphate + H2O = a ribonucleoside 5'-phosphate + diphosphate + H(+). The catalysed reaction is a 2'-deoxyribonucleoside 5'-triphosphate + H2O = a 2'-deoxyribonucleoside 5'-phosphate + diphosphate + H(+). In terms of biological role, nucleoside triphosphate pyrophosphatase. May have a dual role in cell division arrest and in preventing the incorporation of modified nucleotides into cellular nucleic acids. The protein is Nucleoside triphosphate pyrophosphatase of Hyphomonas neptunium (strain ATCC 15444).